The primary structure comprises 276 residues: 5'-nucleotidase SurE (276 aa).

Positions 14, 15, 46, and 104 each coordinate a divalent metal cation.

The protein belongs to the SurE nucleotidase family. It depends on a divalent metal cation as a cofactor.

It is found in the cytoplasm. It catalyses the reaction a ribonucleoside 5'-phosphate + H2O = a ribonucleoside + phosphate. Nucleotidase that shows phosphatase activity on nucleoside 5'-monophosphates. In Crocosphaera subtropica (strain ATCC 51142 / BH68) (Cyanothece sp. (strain ATCC 51142)), this protein is 5'-nucleotidase SurE.